The sequence spans 136 residues: Large ribosomal subunit protein bL19 (136 aa).

It belongs to the bacterial ribosomal protein bL19 family.

In terms of biological role, this protein is located at the 30S-50S ribosomal subunit interface and may play a role in the structure and function of the aminoacyl-tRNA binding site. The polypeptide is Large ribosomal subunit protein bL19 (Xylella fastidiosa (strain 9a5c)).